A 189-amino-acid polypeptide reads, in one-letter code: Probable nicotinate-nucleotide adenylyltransferase (189 aa).

The protein belongs to the NadD family.

It carries out the reaction nicotinate beta-D-ribonucleotide + ATP + H(+) = deamido-NAD(+) + diphosphate. It participates in cofactor biosynthesis; NAD(+) biosynthesis; deamido-NAD(+) from nicotinate D-ribonucleotide: step 1/1. Functionally, catalyzes the reversible adenylation of nicotinate mononucleotide (NaMN) to nicotinic acid adenine dinucleotide (NaAD). The protein is Probable nicotinate-nucleotide adenylyltransferase of Bacillus cereus (strain G9842).